Here is a 491-residue protein sequence, read N- to C-terminus: Probable glycine dehydrogenase (decarboxylating) subunit 2 (491 aa).

K273 bears the N6-(pyridoxal phosphate)lysine mark.

It belongs to the GcvP family. C-terminal subunit subfamily. The glycine cleavage system is composed of four proteins: P, T, L and H. In this organism, the P 'protein' is a heterodimer of two subunits. Pyridoxal 5'-phosphate serves as cofactor.

The enzyme catalyses N(6)-[(R)-lipoyl]-L-lysyl-[glycine-cleavage complex H protein] + glycine + H(+) = N(6)-[(R)-S(8)-aminomethyldihydrolipoyl]-L-lysyl-[glycine-cleavage complex H protein] + CO2. Functionally, the glycine cleavage system catalyzes the degradation of glycine. The P protein binds the alpha-amino group of glycine through its pyridoxal phosphate cofactor; CO(2) is released and the remaining methylamine moiety is then transferred to the lipoamide cofactor of the H protein. The chain is Probable glycine dehydrogenase (decarboxylating) subunit 2 from Bacillus cereus (strain B4264).